Consider the following 265-residue polypeptide: Upstream stimulatory factor (265 aa).

Over residues 1 to 18 (MDVQDHTLDQGPQDKDKD) the composition is skewed to basic and acidic residues. 2 disordered regions span residues 1–21 (MDVQ…DLEE) and 119–149 (ASAA…AAGG). The segment covering 134–144 (GEQQPGITQPS) has biased composition (polar residues). One can recognise a bHLH domain in the interval 190 to 245 (RRRATHNEVERRRRDKINNWIVKLSKIIPDCNIDHSKQGQSKGGILTKTCDYIHDL).

Efficient DNA binding requires dimerization with another bHLH protein. Binds DNA as a homodimer or a heterodimer. As to expression, enriched in ectodermal tissue.

Its subcellular location is the nucleus. May act as a transcription factor which recognizes the CACGTG motif on SPEC gene promoters. The protein is Upstream stimulatory factor of Strongylocentrotus purpuratus (Purple sea urchin).